Here is a 268-residue protein sequence, read N- to C-terminus: MGSEDNIKETFFISHGTPMMAIDDSKPSKKFLESWREKIFSKKPKAILVISAHWETDQPSVNVVDINDTIYDFRGFPARLYQFKYSAPGSPELANRIQDLLAGSGFKSVNTDKKRGLDHGAWVPLMLMYPEADIPVCQLSVQSHLDGTHHYKLGQALAPLKDEGVLIIGSGSATHPSNGTPPCSDGVAPWAAAFDSWLETALTNGSYEEVNKYETKAPNWKLAHPWPEHFYPLHVAMGAAGENSKAELIHNSWDGGIMSYGSYKFTST.

His15, His53, His175, and His229 together coordinate Zn(2+).

The protein belongs to the DODA-type extradiol aromatic ring-opening dioxygenase family. In terms of assembly, monomer. Zn(2+) serves as cofactor.

It is found in the cytoplasm. It catalyses the reaction L-dopa + O2 = 4-(L-alanin-3-yl)-2-hydroxy-cis,cis-muconate 6-semialdehyde + H(+). It functions in the pathway pigment biosynthesis; betalain biosynthesis. Opens the cyclic ring of dihydroxy-phenylalanine (DOPA) between carbons 4 and 5, thus producing an unstable seco-DOPA that rearranges nonenzymatically to betalamic acid. Produces mainly (S)-betalamic acid. In Beta vulgaris (Sugar beet), this protein is 4,5-DOPA dioxygenase extradiol (DODA).